Consider the following 216-residue polypeptide: MSEEAYEETQESSQSPRPVPKLNERILSTLSRRSVAAHPWHDLEIGPEAPLVFNVVVEITKGSKVKYELDKKTGLIKVDRILYSSVVYPHNYGFIPRTLCEDNDPLDVLVLMQEPVLPGCFLRARAIGLMPMIDQGEKDDKIIAVCADDPEYKHFTDIKQLAPHRLQEIRRFFEDYKKNENKKVAVNDFLPSESAHEAIQYSMDLYAEYILHTLRR.

Over residues 1-10 (MSEEAYEETQ) the composition is skewed to acidic residues. The interval 1–21 (MSEEAYEETQESSQSPRPVPK) is disordered. Substrate is bound by residues K66 and R80. The Proton donor role is filled by Y88. Y92 serves as a coordination point for substrate. Mg(2+)-binding residues include D102, D107, and D139. Y176 contributes to the substrate binding site.

It belongs to the PPase family. Mg(2+) is required as a cofactor. As to expression, expressed preferentially in stamen, pollen and flower, and at a low level in lateral roots and root elongation zones.

It localises to the cytoplasm. It catalyses the reaction diphosphate + H2O = 2 phosphate + H(+). The chain is Soluble inorganic pyrophosphatase 3 from Arabidopsis thaliana (Mouse-ear cress).